A 398-amino-acid polypeptide reads, in one-letter code: UPF0261 protein RA0729 (398 aa).

It belongs to the UPF0261 family.

This Rhizobium meliloti (strain 1021) (Ensifer meliloti) protein is UPF0261 protein RA0729.